A 172-amino-acid chain; its full sequence is Nicotinamide-nucleotide adenylyltransferase (172 aa).

It belongs to the archaeal NMN adenylyltransferase family.

The protein resides in the cytoplasm. It carries out the reaction beta-nicotinamide D-ribonucleotide + ATP + H(+) = diphosphate + NAD(+). It functions in the pathway cofactor biosynthesis; NAD(+) biosynthesis; NAD(+) from nicotinamide D-ribonucleotide: step 1/1. This Methanococcus aeolicus (strain ATCC BAA-1280 / DSM 17508 / OCM 812 / Nankai-3) protein is Nicotinamide-nucleotide adenylyltransferase.